The following is a 308-amino-acid chain: Endonuclease G, mitochondrial (308 aa).

The Proton acceptor role is filled by histidine 148. Residue asparagine 180 coordinates Mg(2+).

It belongs to the DNA/RNA non-specific endonuclease family. As to quaternary structure, homodimer; disulfide-linked. Interacts with crn-5, crn-4, crn-1 and cyn-13. Requires Mg(2+) as cofactor.

The protein resides in the mitochondrion. Its function is as follows. Endonuclease important for programmed cell death; it mediates apoptotic DNA fragmentation. The chain is Endonuclease G, mitochondrial (cps-6) from Caenorhabditis elegans.